Reading from the N-terminus, the 415-residue chain is Multidrug resistance protein MdtA (415 aa).

A signal peptide spans 1–21 (MKGSYKSRWVIVIVVVIAAIA). 2 disordered regions span residues 32 to 59 (SRSA…SGPL) and 392 to 415 (EAQS…GARS). Positions 399–415 (SEEKATSREYAKKGARS) are enriched in basic and acidic residues.

This sequence belongs to the membrane fusion protein (MFP) (TC 8.A.1) family. Part of a tripartite efflux system composed of MdtA, MdtB and MdtC.

It is found in the cell inner membrane. The MdtABC tripartite complex confers resistance against novobiocin and deoxycholate. This is Multidrug resistance protein MdtA from Escherichia coli O17:K52:H18 (strain UMN026 / ExPEC).